The following is a 348-amino-acid chain: RNA 3'-terminal phosphate cyclase (348 aa).

ATP is bound by residues Gln-107 and 290–294; that span reads HLADQ. His-316 acts as the Tele-AMP-histidine intermediate in catalysis.

Belongs to the RNA 3'-terminal cyclase family. Type 1 subfamily.

The protein resides in the cytoplasm. It carries out the reaction a 3'-end 3'-phospho-ribonucleotide-RNA + ATP = a 3'-end 2',3'-cyclophospho-ribonucleotide-RNA + AMP + diphosphate. In terms of biological role, catalyzes the conversion of 3'-phosphate to a 2',3'-cyclic phosphodiester at the end of RNA. The mechanism of action of the enzyme occurs in 3 steps: (A) adenylation of the enzyme by ATP; (B) transfer of adenylate to an RNA-N3'P to produce RNA-N3'PP5'A; (C) and attack of the adjacent 2'-hydroxyl on the 3'-phosphorus in the diester linkage to produce the cyclic end product. The biological role of this enzyme is unknown but it is likely to function in some aspects of cellular RNA processing. This Trichormus variabilis (strain ATCC 29413 / PCC 7937) (Anabaena variabilis) protein is RNA 3'-terminal phosphate cyclase.